A 46-amino-acid chain; its full sequence is uncharacterized protein (46 aa).

The disordered stretch occupies residues 1–46 (MEVTPLETGRARSHQKASTAAQPHAADEKMTGSTARRYLSQDHQSV).

This is an uncharacterized protein from Treponema pallidum (strain Nichols).